A 210-amino-acid polypeptide reads, in one-letter code: Ribosomal RNA small subunit methyltransferase G (210 aa).

S-adenosyl-L-methionine-binding positions include G76, M81, 127–128 (VE), and R145.

This sequence belongs to the methyltransferase superfamily. RNA methyltransferase RsmG family.

It is found in the cytoplasm. The catalysed reaction is guanosine(527) in 16S rRNA + S-adenosyl-L-methionine = N(7)-methylguanosine(527) in 16S rRNA + S-adenosyl-L-homocysteine. Specifically methylates the N7 position of guanine in position 527 of 16S rRNA. This Acinetobacter baumannii (strain AB307-0294) protein is Ribosomal RNA small subunit methyltransferase G.